The chain runs to 1280 residues: Ankyrin repeat and sterile alpha motif domain-containing protein 1B (1280 aa).

7 ANK repeats span residues 2-31, 57-86, 90-119, 126-155, 159-188, 192-221, and 224-253; these read GKEQ…GLLG, SGYT…STNV, KGCF…SHSR, EKET…DPSM, RGET…NLMS, RKHT…DVNT, and EKGS…DANI. Disordered regions lie at residues 299-322, 361-399, 479-573, 704-723, and 755-791; these read RHRP…LRHK, MESF…EEKS, SVSD…STGS, NGEA…SNTG, and SNLV…PSFT. Residues 482 to 491 are compositionally biased toward basic and acidic residues; it reads DAERGNHGDD. 3 stretches are compositionally biased toward polar residues: residues 520-550, 707-723, and 770-782; these read KQRT…SSLG, ARSN…SNTG, and SRGQ…SSPS. SAM domains lie at 824 to 890 and 898 to 963; these read CPVQ…LPRV and NNPT…RLHE. Disordered stretches follow at residues 960–994 and 1208–1243; these read RLHE…LSQA and GSST…MDQK. A compositionally biased stretch (polar residues) spans 980–994; the sequence is GNHTPPQLSPSLSQA. The PID domain maps to 1071-1223; that stretch reads IFQSCDYEAY…ESFDSKPSKP (153 aa).

The protein resides in the cytoplasm. The protein is Ankyrin repeat and sterile alpha motif domain-containing protein 1B (anks1b) of Danio rerio (Zebrafish).